A 444-amino-acid chain; its full sequence is 23S rRNA (uracil(1939)-C(5))-methyltransferase RlmD (444 aa).

The TRAM domain occupies 5–67 (RNRFDRTPFQ…RHFDEAKTVE (63 aa)). Positions 80, 86, 89, and 168 each coordinate [4Fe-4S] cluster. S-adenosyl-L-methionine contacts are provided by glutamine 276, phenylalanine 305, asparagine 310, glutamate 326, aspartate 353, and aspartate 374. Cysteine 400 functions as the Nucleophile in the catalytic mechanism.

This sequence belongs to the class I-like SAM-binding methyltransferase superfamily. RNA M5U methyltransferase family. RlmD subfamily.

The enzyme catalyses uridine(1939) in 23S rRNA + S-adenosyl-L-methionine = 5-methyluridine(1939) in 23S rRNA + S-adenosyl-L-homocysteine + H(+). In terms of biological role, catalyzes the formation of 5-methyl-uridine at position 1939 (m5U1939) in 23S rRNA. The polypeptide is 23S rRNA (uracil(1939)-C(5))-methyltransferase RlmD (Xanthomonas campestris pv. campestris (strain 8004)).